The following is a 503-amino-acid chain: Maturase K (503 aa).

The protein belongs to the intron maturase 2 family. MatK subfamily.

It is found in the plastid. Its subcellular location is the chloroplast. Functionally, usually encoded in the trnK tRNA gene intron. Probably assists in splicing its own and other chloroplast group II introns. This Backhousia subargentea (Giant ironwood) protein is Maturase K.